Here is a 214-residue protein sequence, read N- to C-terminus: Small ribosomal subunit protein uS2 (214 aa).

It belongs to the universal ribosomal protein uS2 family.

The chain is Small ribosomal subunit protein uS2 from Thermofilum pendens (strain DSM 2475 / Hrk 5).